Here is a 190-residue protein sequence, read N- to C-terminus: Putative manganese efflux pump MntP (190 aa).

The next 5 membrane-spanning stretches (helical) occupy residues 37–57 (LILAGIFGVFQALMPVIGWGI), 64–84 (LSFIRAIDHWVAFLLLAGVGA), 111–131 (LILGLATSIDALAVGMGMAFV), 135–155 (IITLALAMGLTTFVLSLVGAW), and 164–184 (FGGWATVIGGLVLIGLGGNIL).

Belongs to the MntP (TC 9.B.29) family.

It is found in the cell membrane. Functionally, probably functions as a manganese efflux pump. This is Putative manganese efflux pump MntP from Corynebacterium efficiens (strain DSM 44549 / YS-314 / AJ 12310 / JCM 11189 / NBRC 100395).